The sequence spans 276 residues: Large ribosomal subunit protein uL2 (276 aa).

Residues 219-276 (TVRGSVMNPNDHPHGGGEGRAPIGRKSPMSPWGKPTLGYKTRQRNKPSDKYIVRKRKK) are disordered.

The protein belongs to the universal ribosomal protein uL2 family. Part of the 50S ribosomal subunit. Forms a bridge to the 30S subunit in the 70S ribosome.

In terms of biological role, one of the primary rRNA binding proteins. Required for association of the 30S and 50S subunits to form the 70S ribosome, for tRNA binding and peptide bond formation. It has been suggested to have peptidyltransferase activity; this is somewhat controversial. Makes several contacts with the 16S rRNA in the 70S ribosome. The protein is Large ribosomal subunit protein uL2 of Oceanobacillus iheyensis (strain DSM 14371 / CIP 107618 / JCM 11309 / KCTC 3954 / HTE831).